The sequence spans 303 residues: NAD(+)--arginine ADP-ribosyltransferase Lart1 (303 aa).

The protein localises to the secreted. The catalysed reaction is L-arginyl-[protein] + NAD(+) = N(omega)-(ADP-D-ribosyl)-L-arginyl-[protein] + nicotinamide + H(+). In terms of biological role, ADP-ribosyltransferase that targets a specific class of NAD(+)-dependent glutamate dehydrogenase (GDH) enzymes found in fungi and protists, including many natural hosts of Legionella. Acts by targeting a conserved arginine residue in the NAD(+)-binding pocket of GDH, thereby blocking oxidative deamination of glutamate. Lart1 may target amoeba GDH to prevent a conserved stress response. In vitro, acts on Glud2 from the amoeba Dictyostelium discoideum (DdGluD2) and yeast Gdh2p but does not act on human or Legionella GDH homologs. This is NAD(+)--arginine ADP-ribosyltransferase Lart1 from Legionella pneumophila subsp. pneumophila (strain Philadelphia 1 / ATCC 33152 / DSM 7513).